We begin with the raw amino-acid sequence, 500 residues long: Serine carboxypeptidase 3 (500 aa).

The N-terminal stretch at 1-21 (MATARVSLILLVVVLAASACA) is a signal peptide. A propeptide spanning residues 22–73 (EGLRLPRDAKFPAAQAERLIRSLNLLPKEAGPTGAGDVPSVAPGELLERRVT) is cleaved from the precursor. Cystine bridges form between cysteine 126/cysteine 366, cysteine 294/cysteine 309, and cysteine 332/cysteine 337. A glycan (N-linked (GlcNAc...) asparagine) is linked at asparagine 144. Residue serine 216 is part of the active site. Aspartate 404 is an active-site residue. Position 407 (cysteine 407) interacts with substrate. Residue histidine 461 is part of the active site. Positions 485–500 (EEWLAELPEQPMYAAM) are excised as a propeptide.

It belongs to the peptidase S10 family. Monomer.

The catalysed reaction is Release of a C-terminal amino acid with broad specificity.. The chain is Serine carboxypeptidase 3 (CBP3) from Oryza sativa subsp. japonica (Rice).